A 637-amino-acid polypeptide reads, in one-letter code: Phosphomethylpyrimidine synthase (637 aa).

Residues Asn-242, Met-271, Tyr-300, His-336, 356 to 358 (SRG), 397 to 400 (DGLR), and Glu-436 contribute to the substrate site. Residue His-440 participates in Zn(2+) binding. Tyr-463 is a substrate binding site. Residue His-504 coordinates Zn(2+). Residues Cys-584, Cys-587, and Cys-592 each coordinate [4Fe-4S] cluster.

This sequence belongs to the ThiC family. In terms of assembly, homodimer. The cofactor is [4Fe-4S] cluster.

It carries out the reaction 5-amino-1-(5-phospho-beta-D-ribosyl)imidazole + S-adenosyl-L-methionine = 4-amino-2-methyl-5-(phosphooxymethyl)pyrimidine + CO + 5'-deoxyadenosine + formate + L-methionine + 3 H(+). The protein operates within cofactor biosynthesis; thiamine diphosphate biosynthesis. Functionally, catalyzes the synthesis of the hydroxymethylpyrimidine phosphate (HMP-P) moiety of thiamine from aminoimidazole ribotide (AIR) in a radical S-adenosyl-L-methionine (SAM)-dependent reaction. The polypeptide is Phosphomethylpyrimidine synthase (Herminiimonas arsenicoxydans).